Reading from the N-terminus, the 376-residue chain is Putative glutamate--cysteine ligase 2 (376 aa).

This sequence belongs to the glutamate--cysteine ligase type 2 family. YbdK subfamily.

It catalyses the reaction L-cysteine + L-glutamate + ATP = gamma-L-glutamyl-L-cysteine + ADP + phosphate + H(+). ATP-dependent carboxylate-amine ligase which exhibits weak glutamate--cysteine ligase activity. The protein is Putative glutamate--cysteine ligase 2 of Mycobacterium bovis (strain ATCC BAA-935 / AF2122/97).